The primary structure comprises 305 residues: Ribonuclease BN (305 aa).

Zn(2+)-binding residues include His-64, His-66, Asp-68, His-69, His-141, Asp-212, and His-270. Asp-68 serves as the catalytic Proton acceptor.

The protein belongs to the RNase Z family. RNase BN subfamily. As to quaternary structure, homodimer. It depends on Zn(2+) as a cofactor.

Zinc phosphodiesterase, which has both exoribonuclease and endoribonuclease activities. This chain is Ribonuclease BN, found in Enterobacter sp. (strain 638).